Reading from the N-terminus, the 429-residue chain is 3-phosphoshikimate 1-carboxyvinyltransferase (429 aa).

The 3-phosphoshikimate site is built by Lys-23, Ser-24, and Arg-28. Lys-23 is a binding site for phosphoenolpyruvate. Positions 95 and 123 each coordinate phosphoenolpyruvate. Residues Ser-168, Gln-170, Asp-316, and Lys-343 each coordinate 3-phosphoshikimate. Gln-170 is a binding site for phosphoenolpyruvate. Asp-316 functions as the Proton acceptor in the catalytic mechanism. Residues Arg-347 and Arg-389 each coordinate phosphoenolpyruvate.

This sequence belongs to the EPSP synthase family. Monomer.

The protein resides in the cytoplasm. The catalysed reaction is 3-phosphoshikimate + phosphoenolpyruvate = 5-O-(1-carboxyvinyl)-3-phosphoshikimate + phosphate. Its pathway is metabolic intermediate biosynthesis; chorismate biosynthesis; chorismate from D-erythrose 4-phosphate and phosphoenolpyruvate: step 6/7. Catalyzes the transfer of the enolpyruvyl moiety of phosphoenolpyruvate (PEP) to the 5-hydroxyl of shikimate-3-phosphate (S3P) to produce enolpyruvyl shikimate-3-phosphate and inorganic phosphate. This chain is 3-phosphoshikimate 1-carboxyvinyltransferase, found in Bacillus cereus (strain AH187).